Reading from the N-terminus, the 367-residue chain is DNA replication and repair protein RecF (367 aa).

Gly30–Thr37 provides a ligand contact to ATP.

This sequence belongs to the RecF family.

It is found in the cytoplasm. In terms of biological role, the RecF protein is involved in DNA metabolism; it is required for DNA replication and normal SOS inducibility. RecF binds preferentially to single-stranded, linear DNA. It also seems to bind ATP. The protein is DNA replication and repair protein RecF of Pseudomonas fluorescens (strain SBW25).